The chain runs to 329 residues: Neuropeptides B/W receptor type 1 (329 aa).

Over Met1–Ala39 the chain is Extracellular. Asn3, Asn13, and Asn25 each carry an N-linked (GlcNAc...) asparagine glycan. The helical transmembrane segment at Val40 to Val63 threads the bilayer. Topologically, residues Leu64 to Thr74 are cytoplasmic. A helical transmembrane segment spans residues Asn75–Phe99. Residues Leu100–Ile114 lie on the Extracellular side of the membrane. An intrachain disulfide couples Cys111 to Cys190. A helical transmembrane segment spans residues Val115 to Ala134. Topologically, residues Asp135 to Ala159 are cytoplasmic. The helical transmembrane segment at Val160–Ala179 threads the bilayer. Residues Arg180 to Ala204 are Extracellular-facing. A helical transmembrane segment spans residues Ser205–Ile226. The Cytoplasmic segment spans residues Thr227–Arg250. The chain crosses the membrane as a helical span at residues Val251–Val275. The Extracellular portion of the chain corresponds to Ala276–Pro285. The helical transmembrane segment at Leu286–Ala300 threads the bilayer. Residues Asn301–Ala329 are Cytoplasmic-facing.

Belongs to the G-protein coupled receptor 1 family.

The protein resides in the cell membrane. In terms of biological role, interacts specifically with a number of opioid ligands. Receptor for neuropeptides B and W, which may be involved in neuroendocrine system regulation, food intake and the organization of other signals. This is Neuropeptides B/W receptor type 1 (Npbwr1) from Rattus norvegicus (Rat).